The sequence spans 801 residues: Phenylalanine--tRNA ligase beta subunit (801 aa).

The tRNA-binding domain maps to 39 to 153 (AEGLSKLVVG…EGAIPGDSIF (115 aa)). Residues 406 to 481 (TEPVEVSTTL…RIYGYEKLPT (76 aa)) enclose the B5 domain. Positions 459, 465, 468, and 469 each coordinate Mg(2+). One can recognise an FDX-ACB domain in the interval 708–801 (TKYPSVSRDI…LVEKVNAEIR (94 aa)).

This sequence belongs to the phenylalanyl-tRNA synthetase beta subunit family. Type 1 subfamily. Tetramer of two alpha and two beta subunits. Requires Mg(2+) as cofactor.

The protein localises to the cytoplasm. It carries out the reaction tRNA(Phe) + L-phenylalanine + ATP = L-phenylalanyl-tRNA(Phe) + AMP + diphosphate + H(+). The chain is Phenylalanine--tRNA ligase beta subunit from Streptococcus agalactiae serotype V (strain ATCC BAA-611 / 2603 V/R).